Reading from the N-terminus, the 305-residue chain is Probable lipid kinase YegS-like (305 aa).

The DAGKc domain maps to 1–129 (MTQRRAMLIL…VDLGEVGGKL (129 aa)). ATP-binding positions include Thr39, 65-71 (GDGTLRD), and Thr92. Mg(2+) contacts are provided by Leu210, Asp213, and Leu215. Glu268 (proton acceptor) is an active-site residue.

It belongs to the diacylglycerol/lipid kinase family. YegS lipid kinase subfamily. Mg(2+) is required as a cofactor. The cofactor is Ca(2+).

The protein localises to the cytoplasm. In terms of biological role, probably phosphorylates lipids; the in vivo substrate is unknown. The protein is Probable lipid kinase YegS-like of Pseudomonas savastanoi pv. phaseolicola (strain 1448A / Race 6) (Pseudomonas syringae pv. phaseolicola (strain 1448A / Race 6)).